The chain runs to 131 residues: Small ribosomal subunit protein bS6 (131 aa).

The disordered stretch occupies residues 100–131; that stretch reads SPMVKAKDERRERREDFANETSDDADAGDSEE. The segment covering 104-116 has biased composition (basic and acidic residues); the sequence is KAKDERRERREDF. Residues 120 to 131 are compositionally biased toward acidic residues; the sequence is TSDDADAGDSEE.

It belongs to the bacterial ribosomal protein bS6 family.

Functionally, binds together with bS18 to 16S ribosomal RNA. The chain is Small ribosomal subunit protein bS6 from Erwinia tasmaniensis (strain DSM 17950 / CFBP 7177 / CIP 109463 / NCPPB 4357 / Et1/99).